Consider the following 546-residue polypeptide: CTP synthase (546 aa).

An amidoligase domain region spans residues 1 to 266 (MTTRYIFVTG…DELVVKRFSL (266 aa)). Residue Ser14 coordinates CTP. Ser14 contributes to the UTP binding site. Residues 15-20 (SLGKGI) and Asp72 each bind ATP. Mg(2+)-binding residues include Asp72 and Glu140. Residues 147-149 (DIE), 187-192 (KTKPTQ), and Lys223 each bind CTP. UTP is bound by residues 187–192 (KTKPTQ) and Lys223. 239-241 (KDV) serves as a coordination point for ATP. Residues 291-542 (VIGMVGKYIE…VAAASAHQKR (252 aa)) enclose the Glutamine amidotransferase type-1 domain. L-glutamine is bound at residue Gly352. Catalysis depends on Cys379, which acts as the Nucleophile; for glutamine hydrolysis. L-glutamine is bound by residues 380 to 383 (LGMQ), Glu403, and Arg470. Catalysis depends on residues His515 and Glu517.

It belongs to the CTP synthase family. Homotetramer.

It carries out the reaction UTP + L-glutamine + ATP + H2O = CTP + L-glutamate + ADP + phosphate + 2 H(+). It catalyses the reaction L-glutamine + H2O = L-glutamate + NH4(+). The catalysed reaction is UTP + NH4(+) + ATP = CTP + ADP + phosphate + 2 H(+). Its pathway is pyrimidine metabolism; CTP biosynthesis via de novo pathway; CTP from UDP: step 2/2. Its activity is regulated as follows. Allosterically activated by GTP, when glutamine is the substrate; GTP has no effect on the reaction when ammonia is the substrate. The allosteric effector GTP functions by stabilizing the protein conformation that binds the tetrahedral intermediate(s) formed during glutamine hydrolysis. Inhibited by the product CTP, via allosteric rather than competitive inhibition. Its function is as follows. Catalyzes the ATP-dependent amination of UTP to CTP with either L-glutamine or ammonia as the source of nitrogen. Regulates intracellular CTP levels through interactions with the four ribonucleotide triphosphates. This Shewanella oneidensis (strain ATCC 700550 / JCM 31522 / CIP 106686 / LMG 19005 / NCIMB 14063 / MR-1) protein is CTP synthase.